A 177-amino-acid chain; its full sequence is Large ribosomal subunit protein uL6 (177 aa).

It belongs to the universal ribosomal protein uL6 family. As to quaternary structure, part of the 50S ribosomal subunit.

Functionally, this protein binds to the 23S rRNA, and is important in its secondary structure. It is located near the subunit interface in the base of the L7/L12 stalk, and near the tRNA binding site of the peptidyltransferase center. This Pseudomonas syringae pv. tomato (strain ATCC BAA-871 / DC3000) protein is Large ribosomal subunit protein uL6.